We begin with the raw amino-acid sequence, 233 residues long: Cytidylate kinase (233 aa).

Residue 15–23 (GPSGAGKSS) coordinates ATP.

Belongs to the cytidylate kinase family. Type 1 subfamily.

It localises to the cytoplasm. It carries out the reaction CMP + ATP = CDP + ADP. The enzyme catalyses dCMP + ATP = dCDP + ADP. The chain is Cytidylate kinase from Citrifermentans bemidjiense (strain ATCC BAA-1014 / DSM 16622 / JCM 12645 / Bem) (Geobacter bemidjiensis).